Consider the following 236-residue polypeptide: UPF0257 lipoprotein YnfC (236 aa).

The first 16 residues, 1-16 (MKYKLLPCLLAILLTG), serve as a signal peptide directing secretion. Residue C17 is the site of N-palmitoyl cysteine attachment. C17 carries S-diacylglycerol cysteine lipidation.

The protein belongs to the UPF0257 family.

It localises to the cell membrane. This Escherichia coli O157:H7 protein is UPF0257 lipoprotein YnfC.